A 75-amino-acid chain; its full sequence is Large ribosomal subunit protein uL24c (75 aa).

It belongs to the universal ribosomal protein uL24 family. In terms of assembly, part of the 50S ribosomal subunit.

The protein localises to the plastid. It is found in the chloroplast. One of two assembly initiator proteins, it binds directly to the 5'-end of the 23S rRNA, where it nucleates assembly of the 50S subunit. The sequence is that of Large ribosomal subunit protein uL24c (rpl24) from Cyanidioschyzon merolae (strain NIES-3377 / 10D) (Unicellular red alga).